We begin with the raw amino-acid sequence, 630 residues long: tRNA uridine 5-carboxymethylaminomethyl modification enzyme MnmG (630 aa).

Residue 13–18 participates in FAD binding; the sequence is GGGHAG. 273 to 287 serves as a coordination point for NAD(+); that stretch reads GPRYCPSIEDKIHRF.

This sequence belongs to the MnmG family. Homodimer. Heterotetramer of two MnmE and two MnmG subunits. FAD serves as cofactor.

It is found in the cytoplasm. Its function is as follows. NAD-binding protein involved in the addition of a carboxymethylaminomethyl (cmnm) group at the wobble position (U34) of certain tRNAs, forming tRNA-cmnm(5)s(2)U34. The protein is tRNA uridine 5-carboxymethylaminomethyl modification enzyme MnmG of Pseudomonas aeruginosa (strain LESB58).